We begin with the raw amino-acid sequence, 167 residues long: Protein archease (167 aa).

Residue Ala2 is modified to N-acetylalanine. Residues Asp39, Asp166, and Ile167 each coordinate Ca(2+).

It belongs to the archease family. Component of the tRNA-splicing ligase complex.

Component of the tRNA-splicing ligase complex required to facilitate the enzymatic turnover of catalytic subunit RTCB. Together with DDX1, acts by facilitating the guanylylation of RTCB, a key intermediate step in tRNA ligation. This Homo sapiens (Human) protein is Protein archease (ZBTB8OS).